The sequence spans 319 residues: Beta-ketoacyl-[acyl-carrier-protein] synthase III (319 aa).

Catalysis depends on residues Cys115 and His246. Residues 247-251 (QANLR) form an ACP-binding region. Residue Asn276 is part of the active site.

It belongs to the thiolase-like superfamily. FabH family. Homodimer.

Its subcellular location is the cytoplasm. The enzyme catalyses malonyl-[ACP] + acetyl-CoA + H(+) = 3-oxobutanoyl-[ACP] + CO2 + CoA. The protein operates within lipid metabolism; fatty acid biosynthesis. In terms of biological role, catalyzes the condensation reaction of fatty acid synthesis by the addition to an acyl acceptor of two carbons from malonyl-ACP. Catalyzes the first condensation reaction which initiates fatty acid synthesis and may therefore play a role in governing the total rate of fatty acid production. Possesses both acetoacetyl-ACP synthase and acetyl transacylase activities. Its substrate specificity determines the biosynthesis of branched-chain and/or straight-chain of fatty acids. The sequence is that of Beta-ketoacyl-[acyl-carrier-protein] synthase III from Coxiella burnetii (strain RSA 331 / Henzerling II).